Reading from the N-terminus, the 174-residue chain is Adenine phosphoribosyltransferase (174 aa).

It belongs to the purine/pyrimidine phosphoribosyltransferase family. In terms of assembly, homodimer.

The protein resides in the cytoplasm. The catalysed reaction is AMP + diphosphate = 5-phospho-alpha-D-ribose 1-diphosphate + adenine. Its pathway is purine metabolism; AMP biosynthesis via salvage pathway; AMP from adenine: step 1/1. In terms of biological role, catalyzes a salvage reaction resulting in the formation of AMP, that is energically less costly than de novo synthesis. This Mycolicibacterium vanbaalenii (strain DSM 7251 / JCM 13017 / BCRC 16820 / KCTC 9966 / NRRL B-24157 / PYR-1) (Mycobacterium vanbaalenii) protein is Adenine phosphoribosyltransferase.